A 638-amino-acid chain; its full sequence is MTHPPKTPLLDQVIYPADLRKLEDRDLPQLAREVRDEMIDAVSRTGGHLGAGLGVVELTIAIHSVFDTPDDRLIFDVGHQCYPHKILTGRRDRIRTLRQENGLSGFTRRAESEYDPFGAAHSSTSISAGLGMAIAADLDKNDRRVIAVIGDGAMSAGMAYEALNNAGALDARLIVILNDNDMSIAPPTGAMSAYLARLASGRTYMGFRDFGKKLTAYLGKNIDRAITRAVEHARGYVTGGTMFEEMGFYHIGPIDGHSFDHLLPVLRNVRDNARGPVLIHVVTQKGKGYPPAEAAADKYHGVNKFDVITGAQARVKPNAPSYTSVFAEALVQEAALDDKIVGITAAMPNGTGLDKLAEAFPSRCFDVGIAEQHAVTFAAGLAAEGYKPFAALYSTFLQRAYDQVVHDVAIQGLPVRFPIDRAGFVGADGPTHAGSFDTAFLATLPGFVVMAAADEAELKHMVRTAVAYDAGPISFRYPRGEGVGVDMPARGEILQIGKGRIVKEGTKVALLSFGTRLADCLLAAEDLEAAGLSTTVADARFAKPLDHDLIRQLARHHEMLITVEEGSVGGFGSQVMQYLSSEGLLDNGLKIRSLVMPDIWMEQAKPEAMNAHAGLDRAGIVSTVFRALGRGVAVGVAG.

Thiamine diphosphate is bound by residues H79 and A120–S122. A Mg(2+)-binding site is contributed by D151. Residues G152–A153, N180, Y289, and E371 contribute to the thiamine diphosphate site. N180 provides a ligand contact to Mg(2+).

Belongs to the transketolase family. DXPS subfamily. Homodimer. Mg(2+) serves as cofactor. Requires thiamine diphosphate as cofactor.

It catalyses the reaction D-glyceraldehyde 3-phosphate + pyruvate + H(+) = 1-deoxy-D-xylulose 5-phosphate + CO2. It functions in the pathway metabolic intermediate biosynthesis; 1-deoxy-D-xylulose 5-phosphate biosynthesis; 1-deoxy-D-xylulose 5-phosphate from D-glyceraldehyde 3-phosphate and pyruvate: step 1/1. Catalyzes the acyloin condensation reaction between C atoms 2 and 3 of pyruvate and glyceraldehyde 3-phosphate to yield 1-deoxy-D-xylulose-5-phosphate (DXP). This Rhizobium etli (strain CIAT 652) protein is 1-deoxy-D-xylulose-5-phosphate synthase.